The sequence spans 277 residues: Undecaprenyl-diphosphatase (277 aa).

Helical transmembrane passes span 44-64 (RAMAFNIIIQLAAILAVVWEF), 86-106 (GNLLLAFMPAVVLGVLFADLI), 110-130 (LFNPVTVAAALVVGGVIMLWA), 184-204 (AATEFSFFLAMPTMVGAAVYS), 215-235 (GDLPVFALGFVTSFIFAMIAV), and 250-270 (FAWYRIVFGLFILATWQFGWV).

Belongs to the UppP family.

It localises to the cell inner membrane. The catalysed reaction is di-trans,octa-cis-undecaprenyl diphosphate + H2O = di-trans,octa-cis-undecaprenyl phosphate + phosphate + H(+). In terms of biological role, catalyzes the dephosphorylation of undecaprenyl diphosphate (UPP). Confers resistance to bacitracin. The chain is Undecaprenyl-diphosphatase from Pseudomonas putida (strain ATCC 47054 / DSM 6125 / CFBP 8728 / NCIMB 11950 / KT2440).